The primary structure comprises 250 residues: Adenosine 5'-phosphosulfate reductase (250 aa).

Residues Cys119, Cys120, Cys202, and Cys205 each coordinate [4Fe-4S] cluster. The Nucleophile; cysteine thiosulfonate intermediate role is filled by Cys230.

The protein belongs to the PAPS reductase family. CysH subfamily. The cofactor is [4Fe-4S] cluster.

It is found in the cytoplasm. It carries out the reaction [thioredoxin]-disulfide + sulfite + AMP + 2 H(+) = adenosine 5'-phosphosulfate + [thioredoxin]-dithiol. It participates in sulfur metabolism; hydrogen sulfide biosynthesis; sulfite from sulfate. In terms of biological role, catalyzes the formation of sulfite from adenosine 5'-phosphosulfate (APS) using thioredoxin as an electron donor. The chain is Adenosine 5'-phosphosulfate reductase from Burkholderia cepacia (Pseudomonas cepacia).